The primary structure comprises 206 residues: Large ribosomal subunit protein uL4 (206 aa).

Residues 63 to 98 (MYRQKGTGRARHSSARAPQFRGGGKAHGPVPHSHAH) are disordered. Over residues 64–76 (YRQKGTGRARHSS) the composition is skewed to basic residues.

This sequence belongs to the universal ribosomal protein uL4 family. In terms of assembly, part of the 50S ribosomal subunit.

In terms of biological role, one of the primary rRNA binding proteins, this protein initially binds near the 5'-end of the 23S rRNA. It is important during the early stages of 50S assembly. It makes multiple contacts with different domains of the 23S rRNA in the assembled 50S subunit and ribosome. Its function is as follows. Forms part of the polypeptide exit tunnel. The chain is Large ribosomal subunit protein uL4 from Chelativorans sp. (strain BNC1).